Here is a 163-residue protein sequence, read N- to C-terminus: 6,7-dimethyl-8-ribityllumazine synthase (163 aa).

5-amino-6-(D-ribitylamino)uracil-binding positions include Phe27, 58-60 (ALE), and 87-89 (CVV). 92–93 (DT) is a (2S)-2-hydroxy-3-oxobutyl phosphate binding site. The active-site Proton donor is His95. Asn120 contacts 5-amino-6-(D-ribitylamino)uracil. A (2S)-2-hydroxy-3-oxobutyl phosphate-binding site is contributed by Arg134.

This sequence belongs to the DMRL synthase family.

The enzyme catalyses (2S)-2-hydroxy-3-oxobutyl phosphate + 5-amino-6-(D-ribitylamino)uracil = 6,7-dimethyl-8-(1-D-ribityl)lumazine + phosphate + 2 H2O + H(+). It functions in the pathway cofactor biosynthesis; riboflavin biosynthesis; riboflavin from 2-hydroxy-3-oxobutyl phosphate and 5-amino-6-(D-ribitylamino)uracil: step 1/2. Catalyzes the formation of 6,7-dimethyl-8-ribityllumazine by condensation of 5-amino-6-(D-ribitylamino)uracil with 3,4-dihydroxy-2-butanone 4-phosphate. This is the penultimate step in the biosynthesis of riboflavin. The protein is 6,7-dimethyl-8-ribityllumazine synthase of Nitrobacter winogradskyi (strain ATCC 25391 / DSM 10237 / CIP 104748 / NCIMB 11846 / Nb-255).